Here is a 419-residue protein sequence, read N- to C-terminus: Glutamate-1-semialdehyde 2,1-aminomutase (419 aa).

Lys-259 is modified (N6-(pyridoxal phosphate)lysine).

It belongs to the class-III pyridoxal-phosphate-dependent aminotransferase family. HemL subfamily. It depends on pyridoxal 5'-phosphate as a cofactor.

The protein resides in the cytoplasm. It catalyses the reaction (S)-4-amino-5-oxopentanoate = 5-aminolevulinate. The protein operates within porphyrin-containing compound metabolism; protoporphyrin-IX biosynthesis; 5-aminolevulinate from L-glutamyl-tRNA(Glu): step 2/2. The chain is Glutamate-1-semialdehyde 2,1-aminomutase (hemL) from Sulfurisphaera tokodaii (strain DSM 16993 / JCM 10545 / NBRC 100140 / 7) (Sulfolobus tokodaii).